Here is a 415-residue protein sequence, read N- to C-terminus: Glutamate-1-semialdehyde 2,1-aminomutase (415 aa).

N6-(pyridoxal phosphate)lysine is present on Lys260.

Belongs to the class-III pyridoxal-phosphate-dependent aminotransferase family. HemL subfamily. The cofactor is pyridoxal 5'-phosphate.

Its subcellular location is the cytoplasm. The catalysed reaction is (S)-4-amino-5-oxopentanoate = 5-aminolevulinate. The protein operates within porphyrin-containing compound metabolism; protoporphyrin-IX biosynthesis; 5-aminolevulinate from L-glutamyl-tRNA(Glu): step 2/2. This is Glutamate-1-semialdehyde 2,1-aminomutase from Methanoculleus marisnigri (strain ATCC 35101 / DSM 1498 / JR1).